The following is a 529-amino-acid chain: Low affinity inorganic phosphate transporter 4 (529 aa).

Residues 1–21 (MASDNLVVLNALDTARTQWYH) lie on the Cytoplasmic side of the membrane. A helical transmembrane segment spans residues 22–42 (VTAVIIAGMGFFTDAYDLFCI). Topologically, residues 43 to 71 (STVSKLLGRLYYYDPSTKAPGKLPHMANN) are extracellular. A helical transmembrane segment spans residues 72-92 (WVIGVALVGTLSGQLVFGWLG). The Cytoplasmic segment spans residues 93–99 (DKLGRKK). A helical membrane pass occupies residues 100–120 (VYGLTLILMVICALCSGLSLG). The Extracellular segment spans residues 121–125 (YSPKS). Residues 126-146 (VIGTLCFFRFWLGFGIGGDYP) traverse the membrane as a helical segment. At 147–161 (LSATIMSEYANKSTR) the chain is on the cytoplasmic side. A helical membrane pass occupies residues 162-182 (GAFIAAVFAMQGVGIIFAGLV). Residues 183 to 211 (SMTISKVFLMNFEGKPFNVDEVLSTEPEA) lie on the Extracellular side of the membrane. Residues 212–232 (DYVWRIVLMLGALPALLTYYW) form a helical membrane-spanning segment. At 233-291 (RMKMPETGRYTAIIEGNAKQAAIDMGKVLDIEIQAEGDKLAQFKAANEYSLLSNEFFQR) the chain is on the cytoplasmic side. The helical transmembrane segment at 292–312 (HGLHLIGTMSTWFLLDIAFYS) threads the bilayer. Residues 313 to 344 (QNLTQKDIFPVMGLTSKANTISALREMFETSR) lie on the Extracellular side of the membrane. N314 carries N-linked (GlcNAc...) asparagine glycosylation. Residues 345 to 365 (AMFVIALFGTFPGYWFTVFFI) traverse the membrane as a helical segment. The Cytoplasmic portion of the chain corresponds to 366 to 374 (EKIGRFKIQ). Residues 375-395 (LVGFFMMSVFMAIIGVKYDYL) form a helical membrane-spanning segment. The Extracellular portion of the chain corresponds to 396–405 (RNKEHKWTFA). The chain crosses the membrane as a helical span at residues 406–426 (ALYGLTFFFANFGPNSTTFVL). The Cytoplasmic portion of the chain corresponds to 427 to 437 (PAELFPTRVRS). A helical transmembrane segment spans residues 438-458 (TCHALSAALGKAGAMISAFGI). Topologically, residues 459-471 (QQYTQDQDVRKIK) are extracellular. Residues 472-492 (TAMLLLAFTNMVGFCCTFLVT) form a helical membrane-spanning segment. Residues 493–529 (ETKGRSLEEISGEDGRQNETQMKTTRPVSGHPDDGWE) are Cytoplasmic-facing. The segment at 501–529 (EISGEDGRQNETQMKTTRPVSGHPDDGWE) is disordered. A compositionally biased stretch (polar residues) spans 510 to 519 (NETQMKTTRP).

It belongs to the major facilitator superfamily. Phosphate:H(+) symporter (TC 2.A.1.9) family.

It localises to the cell membrane. The catalysed reaction is phosphate(in) + H(+)(in) = phosphate(out) + H(+)(out). Its function is as follows. Low-affinity transporter for external inorganic phosphate (Pi) probably involved in the acquisition of phosphate released by arbuscular mycorrhizal (AM) fungi (e.g. Rhizophagus irregularis and Glomus intraradices) during AM symbiosis. Acts as a Pi-sensing machinery at the root tip level, independently of AM fungi, involved in the regulation of early root branching and lateral roots formation. The protein is Low affinity inorganic phosphate transporter 4 of Petunia hybrida (Petunia).